We begin with the raw amino-acid sequence, 296 residues long: MDSALFKTIALIGKHKNPDIVIPLLSLAEYLTDRGISVVLDSLTAAHISNSRYPILTLEEIGKQADLAIVLGGDGTMLNIARALVPFSVPLIGINQGRLGFLTDLTADTMHETLNDMLAGQFVVENRMLLTVEVTRNGESVFKELAFNDVVLHRGISSGMIELEVHINGEYVYSLRSDGLIIATPTGSTAYALSSGGPILHPGLNLMTLVPICPHTLSNRPIVIGADATIEIKVHFTTEIKIYTDSHSWFDLSEHDRVFIQRCPETIKLLHPVHHSYYRMLREKLGWSGILQKNSR.

Asp74 functions as the Proton acceptor in the catalytic mechanism. Residues 74–75, 148–149, Arg176, Asp178, and 189–194 contribute to the NAD(+) site; these read DG, ND, and TAYALS.

Belongs to the NAD kinase family. The cofactor is a divalent metal cation.

It localises to the cytoplasm. It catalyses the reaction NAD(+) + ATP = ADP + NADP(+) + H(+). In terms of biological role, involved in the regulation of the intracellular balance of NAD and NADP, and is a key enzyme in the biosynthesis of NADP. Catalyzes specifically the phosphorylation on 2'-hydroxyl of the adenosine moiety of NAD to yield NADP. The polypeptide is NAD kinase (Nitrosomonas europaea (strain ATCC 19718 / CIP 103999 / KCTC 2705 / NBRC 14298)).